A 508-amino-acid polypeptide reads, in one-letter code: Steroid 17-alpha-hydroxylase/17,20 lyase (508 aa).

Cys442 lines the heme pocket.

This sequence belongs to the cytochrome P450 family. It depends on heme as a cofactor.

It localises to the endoplasmic reticulum membrane. The protein resides in the microsome membrane. The catalysed reaction is a C21-steroid + reduced [NADPH--hemoprotein reductase] + O2 = a 17alpha-hydroxy-C21-steroid + oxidized [NADPH--hemoprotein reductase] + H2O + H(+). It catalyses the reaction progesterone + reduced [NADPH--hemoprotein reductase] + O2 = 17alpha-hydroxyprogesterone + oxidized [NADPH--hemoprotein reductase] + H2O + H(+). The enzyme catalyses pregnenolone + reduced [NADPH--hemoprotein reductase] + O2 = 17alpha-hydroxypregnenolone + oxidized [NADPH--hemoprotein reductase] + H2O + H(+). It carries out the reaction 17alpha-hydroxyprogesterone + reduced [NADPH--hemoprotein reductase] + O2 = androst-4-ene-3,17-dione + acetate + oxidized [NADPH--hemoprotein reductase] + H2O + 2 H(+). The catalysed reaction is 17alpha-hydroxyprogesterone + reduced [NADPH--hemoprotein reductase] + O2 = 16alpha,17alpha-dihydroxyprogesterone + oxidized [NADPH--hemoprotein reductase] + H2O + H(+). It catalyses the reaction 16alpha,17alpha-dihydroxyprogesterone + reduced [NADPH--hemoprotein reductase] + O2 = 6beta,16alpha,17alpha-trihydroxyprogesterone + oxidized [NADPH--hemoprotein reductase] + H2O + H(+). The enzyme catalyses 17alpha-hydroxypregnenolone + reduced [NADPH--hemoprotein reductase] + O2 = 3beta-hydroxyandrost-5-en-17-one + acetate + oxidized [NADPH--hemoprotein reductase] + H2O + 2 H(+). It carries out the reaction 16alpha,17alpha-dihydroxypregnenolone + reduced [NADPH--hemoprotein reductase] + O2 = 3beta,16alpha-dihydroxy-androst-5-en-17-one + acetate + oxidized [NADPH--hemoprotein reductase] + H2O + 2 H(+). The catalysed reaction is 3beta-hydroxyandrost-5-en-17-one + reduced [NADPH--hemoprotein reductase] + O2 = 3beta,16alpha-dihydroxy-androst-5-en-17-one + oxidized [NADPH--hemoprotein reductase] + H2O + H(+). It catalyses the reaction androst-4-ene-3,17-dione + reduced [NADPH--hemoprotein reductase] + O2 = 16alpha-hydroxyandrost-4-ene-3,17-dione + oxidized [NADPH--hemoprotein reductase] + H2O + H(+). It functions in the pathway steroid hormone biosynthesis. Its pathway is steroid biosynthesis; glucocorticoid biosynthesis. With respect to regulation, regulated predominantly by intracellular cAMP levels. The 17,20-lyase activity is stimulated by cytochrome b5, which acts as an allosteric effector increasing the Vmax of the lyase activity. A cytochrome P450 monooxygenase involved in corticoid and androgen biosynthesis. Catalyzes 17-alpha hydroxylation of C21 steroids, which is common for both pathways. A second oxidative step, required only for androgen synthesis, involves an acyl-carbon cleavage. The 17-alpha hydroxy intermediates, as part of adrenal glucocorticoids biosynthesis pathway, are precursors of cortisol. Hydroxylates steroid hormones, pregnenolone and progesterone to form 17-alpha hydroxy metabolites, followed by the cleavage of the C17-C20 bond to form C19 steroids, dehydroepiandrosterone (DHEA) and androstenedione. Has 16-alpha hydroxylase activity. Catalyzes 16-alpha hydroxylation of 17-alpha hydroxy pregnenolone, followed by the cleavage of the C17-C20 bond to form 16-alpha-hydroxy DHEA. Also 16-alpha hydroxylates androgens, relevant for estriol synthesis. Mechanistically, uses molecular oxygen inserting one oxygen atom into a substrate, and reducing the second into a water molecule, with two electrons provided by NADPH via cytochrome P450 reductase (CPR; NADPH-ferrihemoprotein reductase). The sequence is that of Steroid 17-alpha-hydroxylase/17,20 lyase (CYP17A1) from Cavia porcellus (Guinea pig).